The chain runs to 567 residues: Sensor histidine kinase MtrB (567 aa).

The span at 1 to 15 (MIFGSRRRIRGRRGR) shows a compositional bias: basic residues. A disordered region spans residues 1 to 20 (MIFGSRRRIRGRRGRSGPMT). Helical transmembrane passes span 42–62 (VVAL…FVLT) and 213–233 (GTMA…ALLV). Residues 235 to 287 (RQVVVPVRSASRIAERFAEGHLSERMPVRGEDDMARLAVSFNDMAESLSRQIA) enclose the HAMP domain. The region spanning 302–519 (DVSHELRTPL…CFRLTLPMVR (218 aa)) is the Histidine kinase domain. His-305 is modified (phosphohistidine; by autocatalysis). A compositionally biased stretch (pro residues) spans 529 to 551 (PMKPIPQPVLQPVAQPNPQPMPP). Residues 529 to 567 (PMKPIPQPVLQPVAQPNPQPMPPEYKERQRPREHAEWSG) are disordered. A compositionally biased stretch (basic and acidic residues) spans 552-567 (EYKERQRPREHAEWSG).

As to quaternary structure, interacts with MrtA. Interacts with LpqB, probably extracytoplasmically via MtrB's sensor domain. Mg(2+) is required as a cofactor. Ca(2+) serves as cofactor. The C-terminal domain (residues 234-567) autophosphorylates.

It is found in the cell membrane. It catalyses the reaction ATP + protein L-histidine = ADP + protein N-phospho-L-histidine.. Ca(2+) ions inhibit the phosphotransfer from MtrB to MtrA. Member of the two-component regulatory system MtrA/MtrB. Probably functions as a membrane-associated protein kinase that phosphorylates MtrA in response to environmental signals. Autophosphorylates and transfers phosphate to MtrA in vitro. Overexpression of MtrA alone decreases bacterial virulence in mouse infection; co-expression of MtrA and MtrB restores normal bacterial growth, suggesting that bacterial growth in macrophages requires an optimal ratio of MtrB to MtrA. Probably plays a role in cell division. The polypeptide is Sensor histidine kinase MtrB (mtrB) (Mycobacterium tuberculosis (strain ATCC 25618 / H37Rv)).